The sequence spans 541 residues: Apolipoprotein N-acyltransferase (541 aa).

6 helical membrane passes run 21 to 41 (LSGFVSILGAACGYGFFWYSL), 54 to 74 (LFVSCFFWIFTIEGIHFSWML), 82 to 102 (LIYLVWLTLITILSVLFSGFS), 116 to 136 (FLWSLPGVWVAIEMLRFYGIF), 157 to 177 (FGGFLGWAGQSFAVIAVNMSF), and 189 to 209 (MLWVLTLLLPYTFGAIHYEYL). The 280-residue stretch at 220–499 (LRVAVVQPAH…SGVLETSLPL (280 aa)) folds into the CN hydrolase domain. The active-site Proton acceptor is Glu264. Residue Lys349 is part of the active site. Cys404 serves as the catalytic Nucleophile. A helical membrane pass occupies residues 512 to 532 (YPMILIAFCAVSYLGGGFLGY).

It belongs to the CN hydrolase family. Apolipoprotein N-acyltransferase subfamily.

The protein resides in the cell inner membrane. It carries out the reaction N-terminal S-1,2-diacyl-sn-glyceryl-L-cysteinyl-[lipoprotein] + a glycerophospholipid = N-acyl-S-1,2-diacyl-sn-glyceryl-L-cysteinyl-[lipoprotein] + a 2-acyl-sn-glycero-3-phospholipid + H(+). Its pathway is protein modification; lipoprotein biosynthesis (N-acyl transfer). Its function is as follows. Catalyzes the phospholipid dependent N-acylation of the N-terminal cysteine of apolipoprotein, the last step in lipoprotein maturation. In Chlamydia pneumoniae (Chlamydophila pneumoniae), this protein is Apolipoprotein N-acyltransferase.